The sequence spans 240 residues: Orotidine 5'-phosphate decarboxylase (240 aa).

Substrate is bound by residues Asp-10, Lys-32, 59-68 (DLKLHDIPNT), Thr-122, Arg-183, Gln-192, Gly-212, and Arg-213. The active-site Proton donor is the Lys-61.

Belongs to the OMP decarboxylase family. Type 1 subfamily. As to quaternary structure, homodimer.

The enzyme catalyses orotidine 5'-phosphate + H(+) = UMP + CO2. The protein operates within pyrimidine metabolism; UMP biosynthesis via de novo pathway; UMP from orotate: step 2/2. Catalyzes the decarboxylation of orotidine 5'-monophosphate (OMP) to uridine 5'-monophosphate (UMP). This is Orotidine 5'-phosphate decarboxylase from Carboxydothermus hydrogenoformans (strain ATCC BAA-161 / DSM 6008 / Z-2901).